Reading from the N-terminus, the 416-residue chain is Pigment epithelium-derived factor (416 aa).

A signal peptide spans 1 to 20; the sequence is MQALVLLLWTGALLGFGRCQ. 2 positions are modified to phosphoserine: Ser112 and Ser225. N-linked (GlcNAc...) asparagine glycosylation is present at Asn283.

It belongs to the serpin family. In terms of assembly, interacts with PNPLA2; this interaction stimulates the phospholipase A2 activity of PNPLA2. As to expression, retinal pigment epithelial cells. Located in the interphotoreceptor matrix (IPM) which is between the retinal pigment epithelium and the neural retina.

Its subcellular location is the secreted. The protein resides in the melanosome. Neurotrophic protein; induces extensive neuronal differentiation in retinoblastoma cells. Potent inhibitor of angiogenesis. As it does not undergo the S (stressed) to R (relaxed) conformational transition characteristic of active serpins, it exhibits no serine protease inhibitory activity. This chain is Pigment epithelium-derived factor (SERPINF1), found in Bos taurus (Bovine).